Here is a 338-residue protein sequence, read N- to C-terminus: Protein FosB (338 aa).

Disordered regions lie at residues 1 to 54 (MFQA…PGSF) and 80 to 162 (AQSQ…RVRR). The segment covering 13-31 (SRCSSSPSAESQYLSSVDS) has biased composition (polar residues). Ser27 carries the phosphoserine modification. A compositionally biased stretch (gly residues) spans 113–124 (SSGGASGSGGPS). Low complexity predominate over residues 125 to 137 (TSGTTSGPGPARP). A bZIP domain is found at 155–218 (EEKRRVRRER…ERLEFVLVAH (64 aa)). Positions 157 to 182 (KRRVRRERNKLAAAKCRNRRRELTDR) are basic motif. The tract at residues 183 to 211 (LQAETDQLEEEKAELESEIAELQKEKERL) is leucine-zipper. 2 disordered regions span residues 222–271 (CKIP…TSQD) and 315–338 (AGTQ…LLAL). Over residues 256–265 (LPPPPAPPLP) the composition is skewed to pro residues. Polar residues predominate over residues 318–338 (QRPSGSDQPTDPLNSPSLLAL).

This sequence belongs to the bZIP family. Fos subfamily. In terms of assembly, heterodimer; binds to DNA as heterodimer. Component of an AP-1 transcription factor complex; composed of FOS-JUN heterodimers. As part of the AP-1 transcription factor complex, forms heterodimers with JUN, JUNB or JUND, thereby binding to the AP-1 consensus sequence and stimulating transcription. Interacts with the BAF multiprotein chromatin-remodeling complex subunits SMARCB1 and SMARCD1. Interacts with ARID1A and JUN. In terms of processing, phosphorylated.

The protein localises to the nucleus. Heterodimerizes with proteins of the JUN family to form an AP-1 transcription factor complex, thereby enhancing their DNA binding activity to an AP-1 consensus sequence 5'-TGA[GC]TCA-3' and enhancing their transcriptional activity. Exhibits transactivation activity in vitro. As part of the AP-1 complex, facilitates enhancer selection together with cell-type-specific transcription factors by collaboratively binding to nucleosomal enhancers and recruiting the SWI/SNF (BAF) chromatin remodeling complex to establish accessible chromatin. Together with JUN, plays a role in activation-induced cell death of T cells by binding to the AP-1 promoter site of FASLG/CD95L, and inducing its transcription in response to activation of the TCR/CD3 signaling pathway. Involved in the display of nurturing behavior towards newborns. May play a role in neurogenesis in the hippocampus and in learning and memory-related tasks by regulating the expression of various genes involved in neurogenesis, depression and epilepsy. Implicated in behavioral responses related to morphine reward and spatial memory. This is Protein FosB (FOSB) from Canis lupus familiaris (Dog).